A 324-amino-acid chain; its full sequence is Ribosomal RNA small subunit methyltransferase H (324 aa).

S-adenosyl-L-methionine-binding positions include 47–49 (GGH), Asp67, Leu96, Asp115, and Gln122.

Belongs to the methyltransferase superfamily. RsmH family.

It is found in the cytoplasm. It catalyses the reaction cytidine(1402) in 16S rRNA + S-adenosyl-L-methionine = N(4)-methylcytidine(1402) in 16S rRNA + S-adenosyl-L-homocysteine + H(+). Its function is as follows. Specifically methylates the N4 position of cytidine in position 1402 (C1402) of 16S rRNA. This Halorhodospira halophila (strain DSM 244 / SL1) (Ectothiorhodospira halophila (strain DSM 244 / SL1)) protein is Ribosomal RNA small subunit methyltransferase H.